The primary structure comprises 116 residues: Putative UPF0320 protein YJR162C (116 aa).

Belongs to the UPF0320 family.

This is Putative UPF0320 protein YJR162C from Saccharomyces cerevisiae (strain ATCC 204508 / S288c) (Baker's yeast).